The primary structure comprises 269 residues: Tryptophan synthase alpha chain (269 aa).

Catalysis depends on proton acceptor residues E49 and D60.

This sequence belongs to the TrpA family. As to quaternary structure, tetramer of two alpha and two beta chains.

The enzyme catalyses (1S,2R)-1-C-(indol-3-yl)glycerol 3-phosphate + L-serine = D-glyceraldehyde 3-phosphate + L-tryptophan + H2O. The protein operates within amino-acid biosynthesis; L-tryptophan biosynthesis; L-tryptophan from chorismate: step 5/5. Its function is as follows. The alpha subunit is responsible for the aldol cleavage of indoleglycerol phosphate to indole and glyceraldehyde 3-phosphate. The protein is Tryptophan synthase alpha chain of Delftia acidovorans (strain DSM 14801 / SPH-1).